Consider the following 430-residue polypeptide: Glutamate-1-semialdehyde 2,1-aminomutase (430 aa).

Position 265 is an N6-(pyridoxal phosphate)lysine (lysine 265).

The protein belongs to the class-III pyridoxal-phosphate-dependent aminotransferase family. HemL subfamily. As to quaternary structure, homodimer. Pyridoxal 5'-phosphate is required as a cofactor.

It is found in the cytoplasm. It carries out the reaction (S)-4-amino-5-oxopentanoate = 5-aminolevulinate. It functions in the pathway porphyrin-containing compound metabolism; protoporphyrin-IX biosynthesis; 5-aminolevulinate from L-glutamyl-tRNA(Glu): step 2/2. This chain is Glutamate-1-semialdehyde 2,1-aminomutase, found in Shewanella oneidensis (strain ATCC 700550 / JCM 31522 / CIP 106686 / LMG 19005 / NCIMB 14063 / MR-1).